The sequence spans 278 residues: Large ribosomal subunit protein uL2c (278 aa).

A disordered region spans residues 224-256; sequence NPVDHPHGGGEGRAPIGRKKPTTPWGYPALGRK.

This sequence belongs to the universal ribosomal protein uL2 family. As to quaternary structure, part of the 50S ribosomal subunit.

The protein resides in the plastid. This is Large ribosomal subunit protein uL2c (rpl2) from Cuscuta exaltata (Tall dodder).